A 414-amino-acid polypeptide reads, in one-letter code: COUP transcription factor 2 (414 aa).

A disordered region spans residues 1–72; that stretch reads MAMVVSTWRD…PGGPGSDKQQ (72 aa). The span at 27 to 37 shows a compositional bias: pro residues; that stretch reads PPVPGPPPGAP. Low complexity predominate over residues 38–57; that stretch reads HTPQTPGQGGPASTPAQTAA. A Phosphothreonine modification is found at threonine 51. Residues 58 to 67 are compositionally biased toward gly residues; it reads GGQGGPGGPG. The segment at residues 76–151 is a DNA-binding region (nuclear receptor); that stretch reads HIECVVCGDK…VGMRREAVQR (76 aa). NR C4-type zinc fingers lie at residues 79-99 and 115-139; these read CVVC…CEGC and CRAN…LKKC. Residues 117–414 form an interaction with ZFPM2 region; that stretch reads ANRNCPIDQH…SFNWPYMAIQ (298 aa). One can recognise an NR LBD domain in the interval 177-403; that stretch reads YLSGYISLLL…TLIRDMLLSG (227 aa). The tract at residues 337–414 is important for dimerization; the sequence is LQEKSQCALE…SFNWPYMAIQ (78 aa).

Belongs to the nuclear hormone receptor family. NR2 subfamily. As to quaternary structure, interacts with SQSTM1. Binds DNA as a dimer; homodimer or heterodimer with NR2F6. Interacts with NCOA1, NCOA2, NCOA3 and PPARGC1A. Interacts with ZFPM2. Ubiquitous. Expressed in the stromal cells of developing fetal ovaries.

Its subcellular location is the nucleus. Its function is as follows. Ligand-activated transcription factor. Activated by high concentrations of 9-cis-retinoic acid and all-trans-retinoic acid, but not by dexamethasone, cortisol or progesterone (in vitro). Regulation of the apolipoprotein A-I gene transcription. Binds to DNA site A. May be required to establish ovary identity during early gonad development. This chain is COUP transcription factor 2 (NR2F2), found in Homo sapiens (Human).